Consider the following 95-residue polypeptide: Large ribosomal subunit protein uL23 (95 aa).

It belongs to the universal ribosomal protein uL23 family. As to quaternary structure, part of the 50S ribosomal subunit. Contacts protein L29, and trigger factor when it is bound to the ribosome.

Functionally, one of the early assembly proteins it binds 23S rRNA. One of the proteins that surrounds the polypeptide exit tunnel on the outside of the ribosome. Forms the main docking site for trigger factor binding to the ribosome. This is Large ribosomal subunit protein uL23 from Desulforapulum autotrophicum (strain ATCC 43914 / DSM 3382 / VKM B-1955 / HRM2) (Desulfobacterium autotrophicum).